We begin with the raw amino-acid sequence, 31 residues long: Cyclotide vico-B (31 aa).

A cross-link (cyclopeptide (Gly-Asn)) is located at residues 1-31 (GSIPCAESCVYIPCITGIAGCSCKNKVCYYN). Intrachain disulfides connect C5–C21, C9–C23, and C14–C28.

This sequence belongs to the cyclotide family. Bracelet subfamily. Post-translationally, this is a cyclic peptide.

In terms of biological role, probably participates in a plant defense mechanism. This chain is Cyclotide vico-B, found in Viola cotyledon (Violeta).